The sequence spans 308 residues: Acetylglutamate kinase (308 aa).

Residues 86–87 (GG), arginine 108, and asparagine 201 each bind substrate.

The protein belongs to the acetylglutamate kinase family. ArgB subfamily.

It is found in the cytoplasm. It carries out the reaction N-acetyl-L-glutamate + ATP = N-acetyl-L-glutamyl 5-phosphate + ADP. It functions in the pathway amino-acid biosynthesis; L-arginine biosynthesis; N(2)-acetyl-L-ornithine from L-glutamate: step 2/4. Catalyzes the ATP-dependent phosphorylation of N-acetyl-L-glutamate. In Prochlorococcus marinus (strain MIT 9313), this protein is Acetylglutamate kinase.